The sequence spans 1368 residues: MAP3K epsilon protein kinase 1 (1368 aa).

The Protein kinase domain occupies 20 to 274 (YMLGDEIGKG…AKTLLSHPWI (255 aa)). HEAT repeat units lie at residues 25 to 62 (EIGKGAYGRVYKGLDLENGDFVAIKQVSLENIVQEDLN) and 86 to 125 (SKTKTHLHIILEYVENGSLANIIKPNKFGPFPESLVAVYI). Residues 26–34 (IGKGAYGRV) and Lys-49 contribute to the ATP site. Catalysis depends on Asp-144, which acts as the Proton acceptor. One copy of the HEAT 3 repeat lies at 218–256 (PYYDLQPMPALFRIVQDDNPPIPDSLSPDITDFLRQCFK). Disordered regions lie at residues 296–415 (EATA…KNTS) and 430–507 (QTSH…PVAD). Over residues 351–364 (LGEEGTDNSEDDIM) the composition is skewed to acidic residues. 2 stretches are compositionally biased toward basic and acidic residues: residues 388–399 (SDFHGKSERGET) and 470–486 (SLHDLFHPLDKVSEGKP). Polar residues predominate over residues 488–502 (EASTSMPTSNVNQGD). 5 HEAT repeats span residues 533–571 (SNDGGDLFRLMMGVLKDDVIDIDGLVFDEKVPAENLFPL), 628–653 (IPKSRVICAVLQLINEIIKDNTDFQE), 654–695 (NACL…SSPL), 699–737 (MFIACRGIPVLVGFLEADYAKYREMVHLAIDGMWQVFKL), and 750–788 (AAKNGILLRLINTLYSLNEATRLASISGGLDGQAPRVRS). The disordered stretch occupies residues 777–883 (GGLDGQAPRV…ISLSANRTST (107 aa)). A compositionally biased stretch (polar residues) spans 791-808 (LDPNNPIFGQNETSSLSM). Composition is skewed to basic and acidic residues over residues 813 to 826 (DVLKTRHGGGEEPS) and 836 to 852 (SDVHQPDALHPDGDKPR). HEAT repeat units lie at residues 903-940 (EQVRPLLSLLDKEPPSRHYSGQLDYVKHITGIERHESR), 1025-1063 (ATSSGLLAHMVSTLSADVAREYLEKVADLLLEFARADTT), 1067-1105 (YMCSQSLLSRLFQMFNRVEPPILLKILECTNHLSTDPNC), 1112-1150 (ADAIKHLIPNLELKDGHLVYQIHHEVLSALFNLCKINKR), 1154-1191 (QAAENGIIPHLMLFIMSDSPLKQYALPLLCDMAHASRN), 1196-1234 (LRAHGGLDVYLSLLDDEYWSVIALDSIAVCLAQDNDNRK), 1258-1281 (RHFVHILEPFLKIITKSYRINKTL), 1282-1318 (AVNGLTPLLISRLDHQDAIARLNLLKLIKAVYEHHPR), and 1348-1368 (QVLVKQMATSLLKALHINTIL).

Belongs to the protein kinase superfamily. Ser/Thr protein kinase family. Interacts with SGP1. Post-translationally, autophosphorylated. In terms of tissue distribution, expressed in both the sporophytic and the gametophytic tissues, especially in dividing cells. Mostly present in flower buds and mature flowers. Also accumulates in embryos, in roots apices, trichomes and ovule integuments.

The protein resides in the cytoplasm. It localises to the cytoskeleton. It is found in the microtubule organizing center. Its subcellular location is the nucleus. The protein localises to the nucleolus. The protein resides in the cell membrane. The enzyme catalyses L-seryl-[protein] + ATP = O-phospho-L-seryl-[protein] + ADP + H(+). It catalyses the reaction L-threonyl-[protein] + ATP = O-phospho-L-threonyl-[protein] + ADP + H(+). In terms of biological role, serine/threonine-protein kinase involved in the spatial and temporal control system organizing cortical activities in mitotic and postmitotic cells. Required for the normal functioning of the plasma membrane in developing pollen. Involved in the regulation of cell expansion, cell elongation, and embryo development. This is MAP3K epsilon protein kinase 1 from Arabidopsis thaliana (Mouse-ear cress).